The following is a 198-amino-acid chain: Recombination protein RecR (198 aa).

The C4-type zinc finger occupies 57–72 (CSVCGRLTDDDPCSIC). A Toprim domain is found at 80-175 (TTILVLEDSR…KVTRLARGLA (96 aa)).

This sequence belongs to the RecR family.

Functionally, may play a role in DNA repair. It seems to be involved in an RecBC-independent recombinational process of DNA repair. It may act with RecF and RecO. The chain is Recombination protein RecR from Streptococcus pneumoniae (strain Hungary19A-6).